Here is a 505-residue protein sequence, read N- to C-terminus: MFTSKSNSVSPSPSLEQADADALDISTKVQLYGVLWKRPFGRSSAKWSRRFFIIKESFLLYYSESERKSFETNKYFNIHPKGVIPLGGCLVEAREEPSMPYAMKISHQDFHGNVLLAAESEFEQTQWLEMLQESGKVTWKNAQLGEAMIKSLEAQGLQLAKEKQEYLDKLMEETEELCLQREQREELERLNQVLEAEKQQFEEVVQELRVEQEQIKRELELTARCLKGVEQEKKELRHLTESLQHTLEELSIEKKKTLEMLEEDKNQPQPLTNQSEQPPASDGLHSNLRQIEERMQELLAEKLLAEKRMKENEERSRALEEEREFYSSQSQALQNSLQELTAEKQQAERELKAEVKVRMDLERRLREAEAALRSLEQGLNSKVRNKEKEERMRADVSHLKRFFEECIRNAELEAKMPVIMKNSVYIHKAATRRIKSCRFHRRRSSTSWNDMKPSQSFMTSQLEANNIEELKEVAKRLSRDQRFRESIYHIMATQPGASALPRGGK.

A PH domain is found at 28–136 (KVQLYGVLWK…WLEMLQESGK (109 aa)). Residues 146 to 391 (EAMIKSLEAQ…KVRNKEKEER (246 aa)) are a coiled coil. Positions 264 to 284 (DKNQPQPLTNQSEQPPASDGL) are disordered. Residues 267 to 278 (QPQPLTNQSEQP) show a composition bias toward polar residues. R502 carries the omega-N-methylarginine modification.

Belongs to the PLEKHD1 family.

This chain is Pleckstrin homology domain-containing family D member 1 (Plekhd1), found in Mus musculus (Mouse).